The primary structure comprises 861 residues: Isoleucine--tRNA ligase (861 aa).

The short motif at 57 to 67 (PYANGNIHVGH) is the 'HIGH' region element. E549 lines the L-isoleucyl-5'-AMP pocket. Positions 590-594 (KMSKS) match the 'KMSKS' region motif. K593 lines the ATP pocket.

This sequence belongs to the class-I aminoacyl-tRNA synthetase family. IleS type 1 subfamily. In terms of assembly, monomer.

It localises to the cytoplasm. The enzyme catalyses tRNA(Ile) + L-isoleucine + ATP = L-isoleucyl-tRNA(Ile) + AMP + diphosphate. Its function is as follows. Catalyzes the attachment of isoleucine to tRNA(Ile). As IleRS can inadvertently accommodate and process structurally similar amino acids such as valine, to avoid such errors it has two additional distinct tRNA(Ile)-dependent editing activities. One activity is designated as 'pretransfer' editing and involves the hydrolysis of activated Val-AMP. The other activity is designated 'posttransfer' editing and involves deacylation of mischarged Val-tRNA(Ile). In Mycoplasma pneumoniae (strain ATCC 29342 / M129 / Subtype 1) (Mycoplasmoides pneumoniae), this protein is Isoleucine--tRNA ligase.